The chain runs to 251 residues: Triosephosphate isomerase 1 (251 aa).

9 to 11 (NWK) is a substrate binding site. His95 acts as the Electrophile in catalysis. Glu167 functions as the Proton acceptor in the catalytic mechanism. Substrate is bound by residues Gly173, Ser213, and 234–235 (GG).

Belongs to the triosephosphate isomerase family. As to quaternary structure, homodimer.

Its subcellular location is the cytoplasm. The catalysed reaction is D-glyceraldehyde 3-phosphate = dihydroxyacetone phosphate. It participates in carbohydrate biosynthesis; gluconeogenesis. It functions in the pathway carbohydrate degradation; glycolysis; D-glyceraldehyde 3-phosphate from glycerone phosphate: step 1/1. In terms of biological role, involved in the gluconeogenesis. Catalyzes stereospecifically the conversion of dihydroxyacetone phosphate (DHAP) to D-glyceraldehyde-3-phosphate (G3P). The polypeptide is Triosephosphate isomerase 1 (Listeria monocytogenes serovar 1/2a (strain ATCC BAA-679 / EGD-e)).